The primary structure comprises 327 residues: 4-diphosphocytidyl-2-C-methyl-D-erythritol kinase (327 aa).

Lys-14 is an active-site residue. Pro-97–Ala-107 serves as a coordination point for ATP. The active site involves Asp-140.

It belongs to the GHMP kinase family. IspE subfamily.

The catalysed reaction is 4-CDP-2-C-methyl-D-erythritol + ATP = 4-CDP-2-C-methyl-D-erythritol 2-phosphate + ADP + H(+). The protein operates within isoprenoid biosynthesis; isopentenyl diphosphate biosynthesis via DXP pathway; isopentenyl diphosphate from 1-deoxy-D-xylulose 5-phosphate: step 3/6. Its function is as follows. Catalyzes the phosphorylation of the position 2 hydroxy group of 4-diphosphocytidyl-2C-methyl-D-erythritol. In Oleidesulfovibrio alaskensis (strain ATCC BAA-1058 / DSM 17464 / G20) (Desulfovibrio alaskensis), this protein is 4-diphosphocytidyl-2-C-methyl-D-erythritol kinase.